The chain runs to 436 residues: F-box protein SKIP16 (436 aa).

In terms of domain architecture, F-box; degenerate spans 75-111 (RESFRMYPWNLVKRVRLCWDNLKQWLTLNFPEAKATL). In terms of domain architecture, ApaG spans 295 to 436 (VSVTNGVQVR…FPLELPDYIF (142 aa)).

As to quaternary structure, part of a SCF (ASK-cullin-F-box) protein ligase complex. Interacts with SKP1A/ASK1, SKP1B/ASK2, ASK4, ASK11 and ASK13.

It functions in the pathway protein modification; protein ubiquitination. In terms of biological role, component of SCF(ASK-cullin-F-box) E3 ubiquitin ligase complexes, which may mediate the ubiquitination and subsequent proteasomal degradation of target proteins. The protein is F-box protein SKIP16 (SKIP16) of Arabidopsis thaliana (Mouse-ear cress).